The following is a 249-amino-acid chain: NAD-dependent protein deacylase 2 (249 aa).

The region spanning methionine 1–arginine 240 is the Deacetylase sirtuin-type domain. Position 18–37 (glycine 18–tryptophan 37) interacts with NAD(+). Residues tyrosine 62 and arginine 65 each contribute to the substrate site. Glutamine 96–aspartate 99 lines the NAD(+) pocket. Histidine 114 serves as the catalytic Proton acceptor. Zn(2+) is bound by residues cysteine 122, cysteine 125, cysteine 142, and cysteine 145. Residues glycine 182 to serine 184, asparagine 208 to glutamate 210, and alanine 226 each bind NAD(+).

Belongs to the sirtuin family. Class III subfamily. Requires Zn(2+) as cofactor.

The protein localises to the cytoplasm. It carries out the reaction N(6)-acetyl-L-lysyl-[protein] + NAD(+) + H2O = 2''-O-acetyl-ADP-D-ribose + nicotinamide + L-lysyl-[protein]. It catalyses the reaction N(6)-succinyl-L-lysyl-[protein] + NAD(+) + H2O = 2''-O-succinyl-ADP-D-ribose + nicotinamide + L-lysyl-[protein]. Functionally, NAD-dependent lysine deacetylase and desuccinylase that specifically removes acetyl and succinyl groups on target proteins. Modulates the activities of several proteins which are inactive in their acylated form. Deacetylates the N-terminal lysine residue of Alba, the major archaeal chromatin protein and that, in turn, increases Alba's DNA binding affinity, thereby repressing transcription. The chain is NAD-dependent protein deacylase 2 from Pyrobaculum aerophilum (strain ATCC 51768 / DSM 7523 / JCM 9630 / CIP 104966 / NBRC 100827 / IM2).